A 156-amino-acid chain; its full sequence is MAKKHPQKPANLIAQNKKAGHDYNILETFEAGLVLTGTEIKSVRKGKISLRDGFARVRRGEAYLENVHISPYEQGNQFNHDPLRNRKLLLHKKEIAKIGALTKDKGITIVPLRVYLKHGFAKVLIGVGEGKREYDKRETLKRKEQDREMARALRKR.

Positions 134-156 (YDKRETLKRKEQDREMARALRKR) are disordered.

It belongs to the SmpB family.

The protein localises to the cytoplasm. In terms of biological role, required for rescue of stalled ribosomes mediated by trans-translation. Binds to transfer-messenger RNA (tmRNA), required for stable association of tmRNA with ribosomes. tmRNA and SmpB together mimic tRNA shape, replacing the anticodon stem-loop with SmpB. tmRNA is encoded by the ssrA gene; the 2 termini fold to resemble tRNA(Ala) and it encodes a 'tag peptide', a short internal open reading frame. During trans-translation Ala-aminoacylated tmRNA acts like a tRNA, entering the A-site of stalled ribosomes, displacing the stalled mRNA. The ribosome then switches to translate the ORF on the tmRNA; the nascent peptide is terminated with the 'tag peptide' encoded by the tmRNA and targeted for degradation. The ribosome is freed to recommence translation, which seems to be the essential function of trans-translation. This chain is SsrA-binding protein, found in Latilactobacillus sakei subsp. sakei (strain 23K) (Lactobacillus sakei subsp. sakei).